We begin with the raw amino-acid sequence, 434 residues long: Glutamyl-tRNA reductase (434 aa).

Substrate contacts are provided by residues 49–52 (TCNR), serine 109, 114–116 (EPQ), and glutamine 120. Cysteine 50 acts as the Nucleophile in catalysis. Residue 189 to 194 (GAGEMA) participates in NADP(+) binding.

This sequence belongs to the glutamyl-tRNA reductase family. In terms of assembly, homodimer.

It catalyses the reaction (S)-4-amino-5-oxopentanoate + tRNA(Glu) + NADP(+) = L-glutamyl-tRNA(Glu) + NADPH + H(+). It functions in the pathway porphyrin-containing compound metabolism; protoporphyrin-IX biosynthesis; 5-aminolevulinate from L-glutamyl-tRNA(Glu): step 1/2. Its function is as follows. Catalyzes the NADPH-dependent reduction of glutamyl-tRNA(Glu) to glutamate 1-semialdehyde (GSA). The chain is Glutamyl-tRNA reductase from Desulfatibacillum aliphaticivorans.